The following is a 288-amino-acid chain: Eukaryotic translation initiation factor 3 subunit F-2 (288 aa).

Residues 12–149 (VLLHPLVLFQ…TRIFCAVATG (138 aa)) enclose the MPN domain.

This sequence belongs to the eIF-3 subunit F family. In terms of assembly, component of the eukaryotic translation initiation factor 3 (eIF-3) complex. The eIF-3 complex interacts with pix.

Its subcellular location is the cytoplasm. Functionally, component of the eukaryotic translation initiation factor 3 (eIF-3) complex, which is involved in protein synthesis of a specialized repertoire of mRNAs and, together with other initiation factors, stimulates binding of mRNA and methionyl-tRNAi to the 40S ribosome. The eIF-3 complex specifically targets and initiates translation of a subset of mRNAs involved in cell proliferation. The protein is Eukaryotic translation initiation factor 3 subunit F-2 of Drosophila pseudoobscura pseudoobscura (Fruit fly).